A 303-amino-acid chain; its full sequence is Acetyl-coenzyme A carboxylase carboxyl transferase subunit beta (303 aa).

Residues 25 to 294 (LWIKCPETGE…NDVSAKSLNG (270 aa)) form the CoA carboxyltransferase N-terminal domain.

Belongs to the AccD/PCCB family. As to quaternary structure, acetyl-CoA carboxylase is a heterohexamer composed of biotin carboxyl carrier protein (AccB), biotin carboxylase (AccC) and two subunits each of ACCase subunit alpha (AccA) and ACCase subunit beta (AccD).

It localises to the cytoplasm. The catalysed reaction is N(6)-carboxybiotinyl-L-lysyl-[protein] + acetyl-CoA = N(6)-biotinyl-L-lysyl-[protein] + malonyl-CoA. Its pathway is lipid metabolism; malonyl-CoA biosynthesis; malonyl-CoA from acetyl-CoA: step 1/1. Component of the acetyl coenzyme A carboxylase (ACC) complex. Biotin carboxylase (BC) catalyzes the carboxylation of biotin on its carrier protein (BCCP) and then the CO(2) group is transferred by the transcarboxylase to acetyl-CoA to form malonyl-CoA. This Rhizobium rhizogenes (strain K84 / ATCC BAA-868) (Agrobacterium radiobacter) protein is Acetyl-coenzyme A carboxylase carboxyl transferase subunit beta.